The chain runs to 120 residues: U13-lycotoxin-Ls1f (120 aa).

The first 16 residues, Met1–Cys16, serve as a signal peptide directing secretion. Residues Phe17 to Arg54 constitute a propeptide that is removed on maturation. Disulfide bonds link Cys56/Cys70, Cys63/Cys76, Cys69/Cys87, and Cys78/Cys85. Positions Cys56 to Cys95 constitute an Agouti domain.

This sequence belongs to the neurotoxin 05 (agouti) family. Contains 6 disulfide bonds. As to expression, expressed by the venom gland.

Its subcellular location is the secreted. In Lycosa singoriensis (Wolf spider), this protein is U13-lycotoxin-Ls1f.